The primary structure comprises 245 residues: 1-(5-phosphoribosyl)-5-[(5-phosphoribosylamino)methylideneamino] imidazole-4-carboxamide isomerase (245 aa).

Residue Asp7 is the Proton acceptor of the active site. Asp129 acts as the Proton donor in catalysis.

It belongs to the HisA/HisF family.

It localises to the cytoplasm. The enzyme catalyses 1-(5-phospho-beta-D-ribosyl)-5-[(5-phospho-beta-D-ribosylamino)methylideneamino]imidazole-4-carboxamide = 5-[(5-phospho-1-deoxy-D-ribulos-1-ylimino)methylamino]-1-(5-phospho-beta-D-ribosyl)imidazole-4-carboxamide. It functions in the pathway amino-acid biosynthesis; L-histidine biosynthesis; L-histidine from 5-phospho-alpha-D-ribose 1-diphosphate: step 4/9. This chain is 1-(5-phosphoribosyl)-5-[(5-phosphoribosylamino)methylideneamino] imidazole-4-carboxamide isomerase, found in Shewanella sp. (strain MR-7).